We begin with the raw amino-acid sequence, 127 residues long: Large-conductance mechanosensitive channel (127 aa).

2 helical membrane passes run 14–34 and 69–89; these read VLDL…VKSL and GAFL…FLIV.

Belongs to the MscL family. As to quaternary structure, homopentamer.

The protein resides in the cell membrane. Functionally, channel that opens in response to stretch forces in the membrane lipid bilayer. May participate in the regulation of osmotic pressure changes within the cell. The sequence is that of Large-conductance mechanosensitive channel from Leuconostoc mesenteroides subsp. mesenteroides (strain ATCC 8293 / DSM 20343 / BCRC 11652 / CCM 1803 / JCM 6124 / NCDO 523 / NBRC 100496 / NCIMB 8023 / NCTC 12954 / NRRL B-1118 / 37Y).